A 311-amino-acid chain; its full sequence is Tyrosine recombinase XerD (311 aa).

Residues 3 to 88 (DMSAAYVEAF…ALRQFYKFLY (86 aa)) form the Core-binding (CB) domain. Residues 109–298 (TLPKTLSIED…LEERLHDLVQ (190 aa)) form the Tyr recombinase domain. Active-site residues include arginine 156, lysine 180, histidine 250, arginine 253, and histidine 276. Catalysis depends on tyrosine 285, which acts as the O-(3'-phospho-DNA)-tyrosine intermediate.

This sequence belongs to the 'phage' integrase family. XerD subfamily. In terms of assembly, forms a cyclic heterotetrameric complex composed of two molecules of XerC and two molecules of XerD.

The protein localises to the cytoplasm. Its function is as follows. Site-specific tyrosine recombinase, which acts by catalyzing the cutting and rejoining of the recombining DNA molecules. The XerC-XerD complex is essential to convert dimers of the bacterial chromosome into monomers to permit their segregation at cell division. It also contributes to the segregational stability of plasmids. This is Tyrosine recombinase XerD from Rhizobium meliloti (strain 1021) (Ensifer meliloti).